The sequence spans 150 residues: Large ribosomal subunit protein uL11 (150 aa).

The protein belongs to the universal ribosomal protein uL11 family. Part of the ribosomal stalk of the 50S ribosomal subunit. Interacts with L10 and the large rRNA to form the base of the stalk. L10 forms an elongated spine to which L12 dimers bind in a sequential fashion forming a multimeric L10(L12)X complex. One or more lysine residues are methylated.

Forms part of the ribosomal stalk which helps the ribosome interact with GTP-bound translation factors. This Cereibacter sphaeroides (strain ATCC 17025 / ATH 2.4.3) (Rhodobacter sphaeroides) protein is Large ribosomal subunit protein uL11.